Reading from the N-terminus, the 440-residue chain is 3-phosphoshikimate 1-carboxyvinyltransferase (440 aa).

3-phosphoshikimate-binding residues include K25, S26, and R30. K25 serves as a coordination point for phosphoenolpyruvate. Positions 96 and 124 each coordinate phosphoenolpyruvate. Residues S168, Q169, D310, and K337 each contribute to the 3-phosphoshikimate site. Q169 lines the phosphoenolpyruvate pocket. D310 acts as the Proton acceptor in catalysis. Phosphoenolpyruvate is bound by residues R341, R382, and K409.

It belongs to the EPSP synthase family. Monomer.

It localises to the cytoplasm. The catalysed reaction is 3-phosphoshikimate + phosphoenolpyruvate = 5-O-(1-carboxyvinyl)-3-phosphoshikimate + phosphate. Its pathway is metabolic intermediate biosynthesis; chorismate biosynthesis; chorismate from D-erythrose 4-phosphate and phosphoenolpyruvate: step 6/7. Its function is as follows. Catalyzes the transfer of the enolpyruvyl moiety of phosphoenolpyruvate (PEP) to the 5-hydroxyl of shikimate-3-phosphate (S3P) to produce enolpyruvyl shikimate-3-phosphate and inorganic phosphate. This Chlamydia trachomatis serovar L2 (strain ATCC VR-902B / DSM 19102 / 434/Bu) protein is 3-phosphoshikimate 1-carboxyvinyltransferase.